The sequence spans 126 residues: Large ribosomal subunit protein eL18 (126 aa).

Belongs to the eukaryotic ribosomal protein eL18 family.

This Methanosarcina mazei (strain ATCC BAA-159 / DSM 3647 / Goe1 / Go1 / JCM 11833 / OCM 88) (Methanosarcina frisia) protein is Large ribosomal subunit protein eL18.